Consider the following 290-residue polypeptide: Transposon Ty3-I Gag polyprotein (290 aa).

At Ser2 the chain carries N-acetylserine. The CCHC-type zinc finger occupies 265-282 (RLCFYCKKEGHRLNECRA).

Its subcellular location is the cytoplasm. Its function is as follows. Capsid protein (CA) is the structural component of the virus-like particle (VLP), forming the shell that encapsulates the retrotransposons dimeric RNA genome. In terms of biological role, nucleocapsid protein p9 (NC) forms the nucleocore that coats the retro-elements dimeric RNA. Binds these RNAs through its zinc fingers. Promotes primer tRNA(i)-Met annealing to the multipartite primer-binding site (PBS), dimerization of Ty3 RNA and initiation of reverse transcription. The chain is Transposon Ty3-I Gag polyprotein (TY3A-I) from Saccharomyces cerevisiae (strain ATCC 204508 / S288c) (Baker's yeast).